A 132-amino-acid polypeptide reads, in one-letter code: MPRPPKCRRVEQFPGFTFFKPSGIPMSELSEVVLSVEELEAIRLRDLEGMEHEECAGKMSVSRPTFHRILASARQKVAHALINGTALRITGGNFKLVQYMLECRRCGHRWKGAICRRMLCPSCSSMDWHRIE.

This sequence belongs to the UPF0251 family.

The sequence is that of UPF0251 protein PTH_0588 from Pelotomaculum thermopropionicum (strain DSM 13744 / JCM 10971 / SI).